Here is a 25-residue protein sequence, read N- to C-terminus: LPPCCTPPKKHCPAPACKYKPCCKS.

7 positions are modified to 4-hydroxyproline: P2, P3, P7, P8, P13, P15, and P21. Cystine bridges form between C4/C17, C5/C22, and C12/C23.

This sequence belongs to the conotoxin M superfamily. Expressed by the venom duct.

It is found in the secreted. Functionally, kappa-conotoxins inhibits voltage-gated potassium channels. This toxin dose-dependently and reversibly inhibits the Kv1.2/KCNA2 channel in mammalia. Does not exert protective effect on cardiac tissue when administered after an ischemic event. In Conus radiatus (Rayed cone), this protein is Kappa-conotoxin RIIIJ.